The chain runs to 1088 residues: Serine/threonine-protein kinase LATS2 (1088 aa).

Positions 24–49 (EGLKQPSKSSVQGLPAGPNSDTSLDA) are disordered. Ser-83 carries the phosphoserine; by AURKA modification. Residues 98 to 139 (EVNRQMLQELVNAGCDQEMAGRALKQTGSRSIEAALEYISKM) enclose the UBA domain. The tract at residues 101-141 (RQMLQELVNAGCDQEMAGRALKQTGSRSIEAALEYISKMGY) is interaction with ubiquitinated AMOTL2. Polar residues predominate over residues 271-280 (RSPSFQSKTP). Positions 271–323 (RSPSFQSKTPPETGGYASLPTKGQGGPPGAGLAFPPPAAGLYVPHPHHKQAGP) are disordered. The residue at position 279 (Thr-279) is a Phosphothreonine. At Ser-380 the chain carries Phosphoserine. Disordered regions lie at residues 383 to 428 (KPGL…SLPA) and 454 to 483 (PQTA…AAEG). Over residues 404–413 (SRTNSFNSHQ) the composition is skewed to polar residues. The segment covering 466-478 (VPAPAPAPAPAPA) has biased composition (pro residues). Positions 515–518 (PPPY) match the PPxY motif motif. Residues 543 to 592 (SLRAGPNEPEGGDKSRKSAKGDKGGKDKKQIQTSPVPVRKNSRDEEKRES) are disordered. Over residues 553–572 (GGDKSRKSAKGDKGGKDKKQ) the composition is skewed to basic and acidic residues. Ser-576 is modified (phosphoserine). Residues 583–592 (NSRDEEKRES) show a composition bias toward basic and acidic residues. A Protein kinase domain is found at 668-973 (FVKIKTLGIG…ADDLKAHPFF (306 aa)). ATP contacts are provided by residues 674–682 (LGIGAFGEV) and Lys-697. Catalysis depends on Asp-791, which acts as the Proton acceptor. In terms of domain architecture, AGC-kinase C-terminal spans 974 to 1052 (SAIDFSSDIR…RRFFDDNGYP (79 aa)). A disordered region spans residues 994 to 1022 (SHPMDTSNFDPVDEESPWNDASEGSTKAW). Thr-1041 is subject to Phosphothreonine. A disordered region spans residues 1056–1088 (PKPSGAEASQAESSDLESSDLVDQTEGCQPVYV).

Belongs to the protein kinase superfamily. AGC Ser/Thr protein kinase family. Interacts with and is phosphorylated by AURKA. Binds to AR. Interacts with AJUBA during mitosis and this complex regulates organization of the spindle apparatus through recruitment of gamma-tubulin to the centrosome. Interacts (via PPxY motif) with YAP1 (via WW domains). Interacts with MOB1A and MOB1B. Interacts with LIMD1, WTIP and AJUBA. Interacts with SNAI1. Interacts with WWC1, WWC2 and WWC3 (via their WW domains). Interacts (via UBA domain) with ubiquitinated AMOTL2; the interaction promotes LATS2 phosphorylation of YAP1. The cofactor is Mg(2+). In terms of processing, autophosphorylated and phosphorylated during M-phase and the G1/S-phase of the cell cycle. Phosphorylated and activated by STK3/MST2. Phosphorylated by MAP4Ks; in parallel to STK3/MST2 and resulting to its activation. Phosphorylation by NUAK2 may regulate its activity in phosphorylation and inactivation YAP1. In terms of tissue distribution, expressed at high levels in heart and skeletal muscle and at lower levels in all other tissues examined.

The protein resides in the cytoplasm. It is found in the cytoskeleton. It localises to the microtubule organizing center. Its subcellular location is the centrosome. The protein localises to the spindle pole. The protein resides in the nucleus. It catalyses the reaction L-seryl-[protein] + ATP = O-phospho-L-seryl-[protein] + ADP + H(+). It carries out the reaction L-threonyl-[protein] + ATP = O-phospho-L-threonyl-[protein] + ADP + H(+). In terms of biological role, negative regulator of YAP1 in the Hippo signaling pathway that plays a pivotal role in organ size control and tumor suppression by restricting proliferation and promoting apoptosis. The core of this pathway is composed of a kinase cascade wherein STK3/MST2 and STK4/MST1, in complex with its regulatory protein SAV1, phosphorylates and activates LATS1/2 in complex with its regulatory protein MOB1, which in turn phosphorylates and inactivates YAP1 oncoprotein and WWTR1/TAZ. Phosphorylation of YAP1 by LATS2 inhibits its translocation into the nucleus to regulate cellular genes important for cell proliferation, cell death, and cell migration. Also phosphorylates YAP1 in response to cell contact inhibition-driven WWP1 ubiquitination of AMOTL2, which results in LATS2 activation. Acts as a tumor suppressor which plays a critical role in centrosome duplication, maintenance of mitotic fidelity and genomic stability. Negatively regulates G1/S transition by down-regulating cyclin E/CDK2 kinase activity. Negative regulator of the androgen receptor. Phosphorylates SNAI1 in the nucleus leading to its nuclear retention and stabilization, which enhances its epithelial-mesenchymal transition and tumor cell invasion/migration activities. This tumor-promoting activity is independent of its effects upon YAP1 or WWTR1/TAZ. Acts as an activator of the NLRP3 inflammasome by mediating phosphorylation of 'Ser-265' of NLRP3 following NLRP3 palmitoylation, promoting NLRP3 activation by NEK7. The sequence is that of Serine/threonine-protein kinase LATS2 from Homo sapiens (Human).